The sequence spans 407 residues: Multifunctional CCA protein (407 aa).

Positions 8 and 11 each coordinate ATP. CTP contacts are provided by glycine 8 and arginine 11. Residues aspartate 21 and aspartate 23 each contribute to the Mg(2+) site. Arginine 91, arginine 137, and arginine 140 together coordinate ATP. 3 residues coordinate CTP: arginine 91, arginine 137, and arginine 140. Residues 228–329 (TGIHTLLVAE…VKIFNKLDVW (102 aa)) form the HD domain.

Belongs to the tRNA nucleotidyltransferase/poly(A) polymerase family. Bacterial CCA-adding enzyme type 1 subfamily. Monomer. Can also form homodimers and oligomers. Mg(2+) is required as a cofactor. Requires Ni(2+) as cofactor.

It carries out the reaction a tRNA precursor + 2 CTP + ATP = a tRNA with a 3' CCA end + 3 diphosphate. The enzyme catalyses a tRNA with a 3' CCA end + 2 CTP + ATP = a tRNA with a 3' CCACCA end + 3 diphosphate. Catalyzes the addition and repair of the essential 3'-terminal CCA sequence in tRNAs without using a nucleic acid template. Adds these three nucleotides in the order of C, C, and A to the tRNA nucleotide-73, using CTP and ATP as substrates and producing inorganic pyrophosphate. tRNA 3'-terminal CCA addition is required both for tRNA processing and repair. Also involved in tRNA surveillance by mediating tandem CCA addition to generate a CCACCA at the 3' terminus of unstable tRNAs. While stable tRNAs receive only 3'-terminal CCA, unstable tRNAs are marked with CCACCA and rapidly degraded. In Vibrio vulnificus (strain CMCP6), this protein is Multifunctional CCA protein.